The sequence spans 277 residues: Pantothenate synthetase (277 aa).

Position 26–33 (26–33) interacts with ATP; the sequence is MGNLHEGH. The active-site Proton donor is the histidine 33. Glutamine 57 contacts (R)-pantoate. Glutamine 57 is a binding site for beta-alanine. 144-147 is a binding site for ATP; it reads GKKD. Glutamine 150 serves as a coordination point for (R)-pantoate. ATP contacts are provided by residues glycine 173 and 181–184; that span reads LSSR.

It belongs to the pantothenate synthetase family. In terms of assembly, homodimer.

The protein resides in the cytoplasm. It catalyses the reaction (R)-pantoate + beta-alanine + ATP = (R)-pantothenate + AMP + diphosphate + H(+). The protein operates within cofactor biosynthesis; (R)-pantothenate biosynthesis; (R)-pantothenate from (R)-pantoate and beta-alanine: step 1/1. Functionally, catalyzes the condensation of pantoate with beta-alanine in an ATP-dependent reaction via a pantoyl-adenylate intermediate. The chain is Pantothenate synthetase from Chromobacterium violaceum (strain ATCC 12472 / DSM 30191 / JCM 1249 / CCUG 213 / NBRC 12614 / NCIMB 9131 / NCTC 9757 / MK).